Consider the following 743-residue polypeptide: MWRRRARSGGGGGGGGGGAAPRCRWWPAVLALLAAALPAARSRSLYSPSDPLELLGADTAERRLLGSPSAWAVEFFASWCGHCIHFAPTWRALAEDVREWRPAVMIAALDCADEANQQVCADFGITGFPTLKFFRAFSKKAEDGIRIAHPTATVADLRRAIITNLEQSGDAWPPACPPLEPASAEEVRSFFHRNTERYLALIFEQSNSFVGREVALDLLQYENVAVRRVLSSEEELVEKFGVTTFPSAYLLLRNGSFSRLPVHAEARSFYTYYLQTLSGVTRGSYRLNVTGSAINETRALQPAQADRSKVYVADLESTVHYTLRVEAGRPAVLAGAQLAALKCYVATLAKYFPGRPSVQTFLQSLDSWLRNWTEPELPRSALKEAVKNKEDASPAAVLPTNVTWVGCRGSEPHFRGYPCGLWTIFHLLTVQAAQGGPDEELPLEVLNTMRCYVKHFFGCQECAQHFEAMAAKSMDQVKSRREAVLWLWSHHNEVNARLAGGDTEDPQFPKLQWPPPDMCPQCHREERGVHTWDEAAVLSFLKEHFSLGNLYLDHAIPIPMAGEEAAASARLSTAGLREKEEEERKEEEEEGEKETEKPHREGETGRPGSSELRRPSIVRRNPRLRALGEDIVDLDSFSEQHFKSKALRAAGRHRRLSKRDTVALHHDAGWERLQVPESREEEEEGGVLRRSPWLRVLGLGFSRLDVSLCIALYFLSSMCLLGMYTFFRLRTRARKGRPGFPVA.

An N-terminal signal peptide occupies residues methionine 1–serine 42. A Thioredoxin domain is found at arginine 43–glutamate 166. Residues cysteine 80 and cysteine 83 each act as nucleophile in the active site. Cystine bridges form between cysteine 80-cysteine 83 and cysteine 111-cysteine 120. N-linked (GlcNAc...) asparagine glycans are attached at residues asparagine 254, asparagine 288, asparagine 295, asparagine 371, and asparagine 401. A disulfide bond links cysteine 407 and cysteine 419. Positions serine 410 to tryptophan 513 constitute an ERV/ALR sulfhydryl oxidase domain. Residues arginine 415, tryptophan 422, histidine 426, glutamate 461, histidine 465, tryptophan 488–asparagine 495, lysine 510, and tryptophan 513 each bind FAD. A disulfide bridge links cysteine 459 with cysteine 462. A disulfide bridge connects residues cysteine 519 and cysteine 522. Residues alanine 567 to isoleucine 617 are disordered. The segment covering glutamate 580–lysine 593 has biased composition (acidic residues). Over residues glutamate 594–threonine 604 the composition is skewed to basic and acidic residues. The chain crosses the membrane as a helical span at residues serine 707–phenylalanine 727.

Belongs to the quiescin-sulfhydryl oxidase (QSOX) family. Requires FAD as cofactor. In terms of processing, N-glycosylated. O-glycosylated on Thr and Ser residues.

Its subcellular location is the golgi apparatus membrane. The protein resides in the secreted. It catalyses the reaction 2 R'C(R)SH + O2 = R'C(R)S-S(R)CR' + H2O2. Its function is as follows. Catalyzes the oxidation of sulfhydryl groups in peptide and protein thiols to disulfides with the reduction of oxygen to hydrogen peroxide. Plays a role in disulfide bond formation in a variety of extracellular proteins. In fibroblasts, required for normal incorporation of laminin into the extracellular matrix, and thereby for normal cell-cell adhesion and cell migration. The protein is Sulfhydryl oxidase 1 (QSOX1) of Gallus gallus (Chicken).